Reading from the N-terminus, the 197-residue chain is Peptide deformylase (197 aa).

Residues Cys106 and His148 each coordinate Fe cation. Glu149 is an active-site residue. His152 provides a ligand contact to Fe cation.

This sequence belongs to the polypeptide deformylase family. It depends on Fe(2+) as a cofactor.

It carries out the reaction N-terminal N-formyl-L-methionyl-[peptide] + H2O = N-terminal L-methionyl-[peptide] + formate. Removes the formyl group from the N-terminal Met of newly synthesized proteins. Requires at least a dipeptide for an efficient rate of reaction. N-terminal L-methionine is a prerequisite for activity but the enzyme has broad specificity at other positions. This Mycobacterium leprae (strain TN) protein is Peptide deformylase.